The primary structure comprises 114 residues: Large ribosomal subunit protein bL20c (114 aa).

This sequence belongs to the bacterial ribosomal protein bL20 family.

The protein resides in the plastid. Functionally, binds directly to 23S ribosomal RNA and is necessary for the in vitro assembly process of the 50S ribosomal subunit. It is not involved in the protein synthesizing functions of that subunit. The protein is Large ribosomal subunit protein bL20c of Prototheca wickerhamii.